A 393-amino-acid polypeptide reads, in one-letter code: Putative mitogen-activated protein kinase kinase kinase 7-like (393 aa).

The Protein kinase domain occupies 11-266 (KLSEKFLGAG…PSMKEIEKFL (256 aa)). ATP contacts are provided by residues 17–25 (LGAGSGGAV) and Lys38. Asp133 acts as the Proton acceptor in catalysis. The disordered stretch occupies residues 339–379 (AAADGDREVRRAEKDTERETSRAAHNGERETRRAGQDVGRE).

The protein belongs to the protein kinase superfamily. STE Ser/Thr protein kinase family. MAP kinase kinase kinase subfamily. Mg(2+) serves as cofactor.

The enzyme catalyses L-seryl-[protein] + ATP = O-phospho-L-seryl-[protein] + ADP + H(+). The catalysed reaction is L-threonyl-[protein] + ATP = O-phospho-L-threonyl-[protein] + ADP + H(+). This chain is Putative mitogen-activated protein kinase kinase kinase 7-like (Takl1), found in Drosophila melanogaster (Fruit fly).